The primary structure comprises 417 residues: Imidazolonepropionase (417 aa).

His-80 and His-82 together coordinate Fe(3+). Zn(2+)-binding residues include His-80 and His-82. 4-imidazolone-5-propanoate-binding residues include Arg-89, Tyr-152, and His-187. Tyr-152 contributes to the N-formimidoyl-L-glutamate binding site. A Fe(3+)-binding site is contributed by His-252. His-252 contacts Zn(2+). 4-imidazolone-5-propanoate is bound at residue Glu-255. Position 326 (Asp-326) interacts with Fe(3+). Asp-326 is a Zn(2+) binding site. Asn-328 and Gly-330 together coordinate N-formimidoyl-L-glutamate. Ser-331 contributes to the 4-imidazolone-5-propanoate binding site.

This sequence belongs to the metallo-dependent hydrolases superfamily. HutI family. Zn(2+) serves as cofactor. The cofactor is Fe(3+).

Its subcellular location is the cytoplasm. The catalysed reaction is 4-imidazolone-5-propanoate + H2O = N-formimidoyl-L-glutamate. Its pathway is amino-acid degradation; L-histidine degradation into L-glutamate; N-formimidoyl-L-glutamate from L-histidine: step 3/3. In terms of biological role, catalyzes the hydrolytic cleavage of the carbon-nitrogen bond in imidazolone-5-propanoate to yield N-formimidoyl-L-glutamate. It is the third step in the universal histidine degradation pathway. The protein is Imidazolonepropionase of Bacteroides thetaiotaomicron (strain ATCC 29148 / DSM 2079 / JCM 5827 / CCUG 10774 / NCTC 10582 / VPI-5482 / E50).